Reading from the N-terminus, the 1644-residue chain is Peroxisome proliferator-activated receptor gamma coactivator-related protein 1 (1644 aa).

7 disordered regions span residues 1 to 61 (MAAR…DSSF), 170 to 249 (PERD…EVAG), 429 to 616 (LTPK…TSPV), 646 to 761 (AADP…PETP), 773 to 884 (SAPA…QPPG), 978 to 1074 (STVS…EGVV), and 1322 to 1507 (AAPP…NDHY). Positions 12–22 (APPPTGGPGPD) are enriched in pro residues. Positions 213–222 (SSPKLPSWRP) are enriched in low complexity. Ser-232 carries the phosphoserine modification. The necessary for interaction with CREB1 and NRF1 and for transcriptional coactivation stretch occupies residues 425-460 (IMESLTPKEPQSLPASASQGSQKVPRKGRKKKNKEQ). The segment covering 437–446 (LPASASQGSQ) has biased composition (polar residues). Over residues 448-457 (VPRKGRKKKN) the composition is skewed to basic residues. The span at 475–496 (SSRGQSTVSAEVNSQAGSSQKQ) shows a compositional bias: polar residues. Residues 515 to 524 (RAWARAWAAA) show a composition bias toward low complexity. Ser-541 is modified (phosphoserine). Positions 556–572 (ETSQANPTLSLNDSAQA) are enriched in polar residues. Positions 691-702 (DHPKVVSPEGKD) are enriched in basic and acidic residues. The span at 811–821 (MVSTHSEQVSS) shows a compositional bias: polar residues. Pro residues-rich tracts occupy residues 828–864 (VRPP…PLLP) and 874–884 (RLPPPPLQPPG). A phosphoserine mark is found at Ser-1059, Ser-1393, and Ser-1395. The tract at residues 1361 to 1432 (EASPCRSEMN…SSSSSVSSSS (72 aa)) is necessary for interaction with CREB1 and NRF1. Composition is skewed to low complexity over residues 1409-1433 (SRSV…SSSR) and 1453-1489 (SSCS…VSPC). The RRM domain maps to 1523 to 1599 (RVVFIGKIPG…QPFDLCFGGR (77 aa)).

In terms of assembly, interacts with CREB1 and NRF1. Expressed in liver, heart, skeletal muscle, kidney and white and brown adipose tissues.

Its subcellular location is the nucleus. In terms of biological role, acts as a coactivator during transcriptional activation of nuclear genes related to mitochondrial biogenesis and cell growth. Involved in the transcription coactivation of CREB and NRF1 target genes. The sequence is that of Peroxisome proliferator-activated receptor gamma coactivator-related protein 1 (Pprc1) from Mus musculus (Mouse).